The primary structure comprises 157 residues: 2-C-methyl-D-erythritol 2,4-cyclodiphosphate synthase (157 aa).

2 residues coordinate a divalent metal cation: aspartate 8 and histidine 10. Residues 8 to 10 (DVH) and 34 to 35 (HS) each bind 4-CDP-2-C-methyl-D-erythritol 2-phosphate. Histidine 42 contributes to the a divalent metal cation binding site. 4-CDP-2-C-methyl-D-erythritol 2-phosphate is bound by residues 56-58 (DIG), 61-65 (FPDTD), 100-106 (AQAPKMA), 132-135 (TTTE), phenylalanine 139, and arginine 142.

Belongs to the IspF family. Homotrimer. Requires a divalent metal cation as cofactor.

The catalysed reaction is 4-CDP-2-C-methyl-D-erythritol 2-phosphate = 2-C-methyl-D-erythritol 2,4-cyclic diphosphate + CMP. The protein operates within isoprenoid biosynthesis; isopentenyl diphosphate biosynthesis via DXP pathway; isopentenyl diphosphate from 1-deoxy-D-xylulose 5-phosphate: step 4/6. Involved in the biosynthesis of isopentenyl diphosphate (IPP) and dimethylallyl diphosphate (DMAPP), two major building blocks of isoprenoid compounds. Catalyzes the conversion of 4-diphosphocytidyl-2-C-methyl-D-erythritol 2-phosphate (CDP-ME2P) to 2-C-methyl-D-erythritol 2,4-cyclodiphosphate (ME-CPP) with a corresponding release of cytidine 5-monophosphate (CMP). This is 2-C-methyl-D-erythritol 2,4-cyclodiphosphate synthase from Pseudomonas fluorescens (strain Pf0-1).